The following is a 265-amino-acid chain: 4-hydroxy-tetrahydrodipicolinate reductase (265 aa).

NAD(+) contacts are provided by residues 7–12 (GASGRM) and D33. R34 contacts NADP(+). NAD(+)-binding positions include 96–98 (GTT) and 120–123 (AANM). H153 (proton donor/acceptor) is an active-site residue. Residue H154 participates in (S)-2,3,4,5-tetrahydrodipicolinate binding. Residue K157 is the Proton donor of the active site. 163–164 (GT) contacts (S)-2,3,4,5-tetrahydrodipicolinate.

This sequence belongs to the DapB family.

The protein resides in the cytoplasm. The enzyme catalyses (S)-2,3,4,5-tetrahydrodipicolinate + NAD(+) + H2O = (2S,4S)-4-hydroxy-2,3,4,5-tetrahydrodipicolinate + NADH + H(+). It carries out the reaction (S)-2,3,4,5-tetrahydrodipicolinate + NADP(+) + H2O = (2S,4S)-4-hydroxy-2,3,4,5-tetrahydrodipicolinate + NADPH + H(+). The protein operates within amino-acid biosynthesis; L-lysine biosynthesis via DAP pathway; (S)-tetrahydrodipicolinate from L-aspartate: step 4/4. Its function is as follows. Catalyzes the conversion of 4-hydroxy-tetrahydrodipicolinate (HTPA) to tetrahydrodipicolinate. The chain is 4-hydroxy-tetrahydrodipicolinate reductase from Burkholderia cenocepacia (strain ATCC BAA-245 / DSM 16553 / LMG 16656 / NCTC 13227 / J2315 / CF5610) (Burkholderia cepacia (strain J2315)).